The primary structure comprises 148 residues: Large ribosomal subunit protein bL9 (148 aa).

It belongs to the bacterial ribosomal protein bL9 family.

In terms of biological role, binds to the 23S rRNA. The chain is Large ribosomal subunit protein bL9 from Thermus thermophilus (strain ATCC BAA-163 / DSM 7039 / HB27).